We begin with the raw amino-acid sequence, 151 residues long: Mini-ribonuclease 3 (151 aa).

Aspartate 28 is a catalytic residue.

The protein belongs to the MrnC RNase family. As to quaternary structure, homodimer. Requires Mg(2+) as cofactor.

The protein localises to the cytoplasm. In terms of biological role, involved in correct processing of both the 5' and 3' ends of 23S rRNA precursor. Processes 30S rRNA precursor transcript even in absence of ribonuclease 3 (Rnc); Rnc processes 30S rRNA into smaller rRNA precursors. The sequence is that of Mini-ribonuclease 3 from Clostridium tetani (strain Massachusetts / E88).